A 245-amino-acid polypeptide reads, in one-letter code: 8-amino-3,8-dideoxy-manno-octulosonate cytidylyltransferase (245 aa).

Belongs to the KdsB family.

It localises to the cytoplasm. It catalyses the reaction 8-amino-3,8-dideoxy-alpha-D-manno-octulosonate + CTP = CMP-8-amino-3,8-dideoxy-alpha-D-manno-oct-2-ulosonate + diphosphate. Its pathway is bacterial outer membrane biogenesis; lipopolysaccharide biosynthesis. Activates KDO8N (a required 8-carbon sugar) for incorporation into bacterial lipopolysaccharide in the Shewanella genus. The polypeptide is 8-amino-3,8-dideoxy-manno-octulosonate cytidylyltransferase (Shewanella oneidensis (strain ATCC 700550 / JCM 31522 / CIP 106686 / LMG 19005 / NCIMB 14063 / MR-1)).